The sequence spans 200 residues: Recombination protein RecR (200 aa).

Residues 58-73 (CSICGNITEDDPCPIC) form a C4-type zinc finger. Residues 81–177 (SQILVVEQSQ…KVTRLAHGLS (97 aa)) form the Toprim domain.

This sequence belongs to the RecR family.

In terms of biological role, may play a role in DNA repair. It seems to be involved in an RecBC-independent recombinational process of DNA repair. It may act with RecF and RecO. In Limosilactobacillus reuteri (strain DSM 20016) (Lactobacillus reuteri), this protein is Recombination protein RecR.